A 123-amino-acid polypeptide reads, in one-letter code: Small ribosomal subunit protein uS12 (123 aa).

A disordered region spans residues 1–27 (MPTIQQLIRKPRQPKIKRSKSMHLQEC). Positions 9 to 21 (RKPRQPKIKRSKS) are enriched in basic residues. The residue at position 89 (Asp89) is a 3-methylthioaspartic acid.

The protein belongs to the universal ribosomal protein uS12 family. In terms of assembly, part of the 30S ribosomal subunit. Contacts proteins S8 and S17. May interact with IF1 in the 30S initiation complex.

In terms of biological role, with S4 and S5 plays an important role in translational accuracy. Functionally, interacts with and stabilizes bases of the 16S rRNA that are involved in tRNA selection in the A site and with the mRNA backbone. Located at the interface of the 30S and 50S subunits, it traverses the body of the 30S subunit contacting proteins on the other side and probably holding the rRNA structure together. The combined cluster of proteins S8, S12 and S17 appears to hold together the shoulder and platform of the 30S subunit. The chain is Small ribosomal subunit protein uS12 from Roseobacter denitrificans (strain ATCC 33942 / OCh 114) (Erythrobacter sp. (strain OCh 114)).